A 137-amino-acid chain; its full sequence is Leaf-specific thionin (137 aa).

The first 28 residues, 1 to 28 (MATNKSIKSVVICVLILGLVLEQVQVEA), serve as a signal peptide directing secretion. Intrachain disulfides connect Cys-31/Cys-68, Cys-32/Cys-60, Cys-40/Cys-58, and Cys-44/Cys-54. A propeptide spans 75–137 (LNLLPESGEP…DGEVIQSVEA (63 aa)) (acidic domain).

Belongs to the plant thionin (TC 1.C.44) family. 4 C-C subfamily.

Its subcellular location is the secreted. Its function is as follows. Thionins are small plant proteins which are toxic to animal cells. They seem to exert their toxic effect at the level of the cell membrane. Their precise function is not known. The polypeptide is Leaf-specific thionin (THI1.5) (Hordeum vulgare (Barley)).